Here is a 426-residue protein sequence, read N- to C-terminus: Probable serine/threonine-protein kinase PBL2 (426 aa).

Positions 1–54 are disordered; it reads MGNCLDSSAKVDNSNHSPHANSASSGSKVSSKTSRSTGPSGLSTTSYSTDSSFG. G2 carries the N-myristoyl glycine lipid modification. A lipid anchor (S-palmitoyl cysteine) is attached at C4. The segment covering 14–38 has biased composition (low complexity); it reads SNHSPHANSASSGSKVSSKTSRSTG. Over residues 39-52 the composition is skewed to polar residues; the sequence is PSGLSTTSYSTDSS. T75 carries the post-translational modification Phosphothreonine. The Protein kinase domain occupies 86 to 369; that stretch reads FRQDNLLGEG…SEVLVTLEQL (284 aa). ATP-binding positions include 92 to 100 and K124; that span reads LGEGGFGCV. Position 169 is a phosphotyrosine (Y169). Residue D219 is the Proton acceptor of the active site. S253 is subject to O-UMP-serine. S253 bears the Phosphoserine mark. A phosphothreonine mark is found at T254 and T259. O-UMP-threonine is present on T254. Y267 is subject to Phosphotyrosine. The segment at 374–426 is disordered; it reads KPGTKHTQMESPRFHHSSVMQKSPVRYSHDRPLLHMTPGASPLPSYTQSPRVR. The span at 417 to 426 shows a compositional bias: polar residues; the sequence is PSYTQSPRVR.

Belongs to the protein kinase superfamily. Ser/Thr protein kinase family. As to quaternary structure, interacts with FLS2. Interacts with the Xanthomonas campestris effector XopAC/AvrAC; the recognition of X.campestris effector XopAC/AvrAC requires the presence of RKS1 and RPP13L4/ZAR1. Component of a stable high-order oligomeric complex made of RKS1 and RPP13L4/ZAR1 which recruits X.campestris effector XopAC/AvrAC-mediated uridylylated PBL2 in the presence of ATP to form a wheel-like pentameric resistosome; this complex triggers immunity toward X.campestris in vascular tissues. Binds to RKS1 when uridylylated. Post-translationally, uridylylated at Ser-253 and Thr-254 by Xanthomonas campestris effector AvrAC/XopAC; this uridylylation is necessary for specific recruitment to RKS1 and to trigger immunity. As to expression, strongly expressed in leaves, moderately in roots, and barely in flowers, mostly in pedicels.

It is found in the cell membrane. It localises to the nucleus. It carries out the reaction L-seryl-[protein] + ATP = O-phospho-L-seryl-[protein] + ADP + H(+). The catalysed reaction is L-threonyl-[protein] + ATP = O-phospho-L-threonyl-[protein] + ADP + H(+). Its function is as follows. Involved in disease resistance signaling. Contributes to pathogen-associated molecular pattern (PAMP)-triggered immunity (PTI) signaling and defense responses downstream of FLS2. Acts as a BIK1 decoy and enables Xanthomonas campestris AvrAC/XopAC detection; X.campestris effector AvrAC/XopAC-mediated uridylylation promotes the formation of a complex with RKS1 and RPP13L4/ZAR1 which, in turn, activates effector-triggered immunity (ETI) against X.campestris. Promotes, when uridylylated by AvrAC/XopAC, the release of ADP from the inactive RKS1-ZAR1 complex, thus activating the resistosome. The chain is Probable serine/threonine-protein kinase PBL2 from Arabidopsis thaliana (Mouse-ear cress).